The chain runs to 318 residues: Methionyl-tRNA formyltransferase (318 aa).

111–114 (SLLP) provides a ligand contact to (6S)-5,6,7,8-tetrahydrofolate.

It belongs to the Fmt family.

The catalysed reaction is L-methionyl-tRNA(fMet) + (6R)-10-formyltetrahydrofolate = N-formyl-L-methionyl-tRNA(fMet) + (6S)-5,6,7,8-tetrahydrofolate + H(+). Functionally, attaches a formyl group to the free amino group of methionyl-tRNA(fMet). The formyl group appears to play a dual role in the initiator identity of N-formylmethionyl-tRNA by promoting its recognition by IF2 and preventing the misappropriation of this tRNA by the elongation apparatus. This is Methionyl-tRNA formyltransferase from Chlorobium limicola (strain DSM 245 / NBRC 103803 / 6330).